A 370-amino-acid chain; its full sequence is 5-hydroxytryptamine receptor 5B (370 aa).

The disordered stretch occupies residues 1–36; that stretch reads MEVSNLSGATPGIAFPPGPESCSDSPSSGRSMGSTP. Residues 1-48 are Extracellular-facing; it reads MEVSNLSGATPGIAFPPGPESCSDSPSSGRSMGSTPGGLILSGREPPF. A glycan (N-linked (GlcNAc...) asparagine) is linked at asparagine 5. Over residues 20 to 36 the composition is skewed to low complexity; the sequence is ESCSDSPSSGRSMGSTP. The helical transmembrane segment at 49–75 threads the bilayer; sequence SAFTVLVVTLLVLLIAATFLWNLLVLV. Residues 76–88 are Cytoplasmic-facing; that stretch reads TILRVRAFHRVPH. A helical membrane pass occupies residues 89–115; the sequence is NLVASTAVSDVLVAALVMPLSLVSELS. Residues 116–127 lie on the Extracellular side of the membrane; sequence AGRRWQLGRSLC. A disulfide bridge links cysteine 127 with cysteine 205. The chain crosses the membrane as a helical span at residues 128–150; sequence HVWISFDVLCCTASIWNVAAIAL. Residue aspartate 134 coordinates serotonin. Residues 151–168 lie on the Cytoplasmic side of the membrane; sequence DRYWTITRHLQYTLRTRR. A helical membrane pass occupies residues 169–189; sequence RASALMIAITWALSALIALAP. Residues 190 to 211 are Extracellular-facing; the sequence is LLFGWGEAYDARLQRCQVSQEP. A helical transmembrane segment spans residues 212-233; sequence SYAVFSTCGAFYVPLAVVLFVY. Over 234 to 300 the chain is Cytoplasmic; sequence WKIYKAAKFR…QKEKRAAMMV (67 aa). Residues 301–325 traverse the membrane as a helical segment; sequence GILIGVFVLCWIPFFLTELVSPLCA. Over 326–327 the chain is Extracellular; it reads CS. A helical membrane pass occupies residues 328-352; the sequence is LPPIWKSIFLWLGYSNSFFNPLIYT. At 353–370 the chain is on the cytoplasmic side; sequence AFNKNYNNAFKSLFTKQR.

The protein belongs to the G-protein coupled receptor 1 family. In terms of tissue distribution, brain; in the CA1 region of hippocampus, the medial habenula, and raphe nuclei.

It is found in the cell membrane. Its function is as follows. G-protein coupled receptor for 5-hydroxytryptamine (serotonin), a biogenic hormone that functions as a neurotransmitter, a hormone and a mitogen. Also functions as a receptor for ergot alkaloid derivatives and other psychoactive substances. Ligand binding causes a conformation change that triggers signaling via guanine nucleotide-binding proteins (G proteins) and modulates the activity of downstream effectors. Htr5b is coupled to G(i)/G(o) G alpha proteins and mediates inhibitory neurotransmission: signaling inhibits adenylate cyclase activity and activates a phosphatidylinositol-calcium second messenger system that regulates the release of Ca(2+) ions from intracellular stores. The sequence is that of 5-hydroxytryptamine receptor 5B from Rattus norvegicus (Rat).